Reading from the N-terminus, the 395-residue chain is Chorismate synthase (395 aa).

Residues arginine 40 and arginine 46 each contribute to the NADP(+) site. A disordered region spans residues 99-120 (PREGRNAPLSRPRPGHADLTGM). FMN-binding positions include 134–136 (RSS), 256–257 (QA), glycine 301, 316–320 (KPIPS), and arginine 342.

The protein belongs to the chorismate synthase family. As to quaternary structure, homotetramer. FMNH2 is required as a cofactor.

The enzyme catalyses 5-O-(1-carboxyvinyl)-3-phosphoshikimate = chorismate + phosphate. It functions in the pathway metabolic intermediate biosynthesis; chorismate biosynthesis; chorismate from D-erythrose 4-phosphate and phosphoenolpyruvate: step 7/7. Catalyzes the anti-1,4-elimination of the C-3 phosphate and the C-6 proR hydrogen from 5-enolpyruvylshikimate-3-phosphate (EPSP) to yield chorismate, which is the branch point compound that serves as the starting substrate for the three terminal pathways of aromatic amino acid biosynthesis. This reaction introduces a second double bond into the aromatic ring system. The chain is Chorismate synthase from Bifidobacterium longum (strain DJO10A).